The primary structure comprises 194 residues: MGAQYLKRVYLMSVIAETNEALLAKIKALCGDYLREVDTHPGQWDDSSVRRLVRNPPAVYVAWLGQQPNNNPHTVTARWGVFVVAEVLNGQRRNAVGIYQIVETLTAGLHKQRIAPSGMFELQTVQNLWSDTQSGMGVAVYGMYFNAVQPLPDMTSDDTLCDFKIYDHTFNQDKDEHTIDGKTRLTVELPTQSD.

To phage Mu protein gp37.

The polypeptide is Mu-like prophage FluMu protein gp37 (Haemophilus influenzae (strain ATCC 51907 / DSM 11121 / KW20 / Rd)).